The sequence spans 99 residues: CLAVATA3/ESR (CLE)-related protein 41 (99 aa).

The signal sequence occupies residues 1–34; the sequence is MATSNDQTNTKSSHSRTLLLLFIFLSLLLFSSLT. The segment at 60-99 is disordered; that stretch reads ASSTMDLRPKASTRRSRTSRRREFGNDAHEVPSGPNPISN. The segment covering 70 to 79 has biased composition (basic residues); that stretch reads ASTRRSRTSR. Positions 80–89 are enriched in basic and acidic residues; that stretch reads RREFGNDAHE. Hydroxyproline occurs at positions 91 and 94. Proline 94 is a glycosylation site (O-linked (Ara...) hydroxyproline).

This sequence belongs to the CLV3/ESR signal peptide family. As to quaternary structure, CLE41p interacts specifically with the leucine-rich repeat receptor-like protein kinase TDR. The O-glycosylation (arabinosylation) of the hydroxyproline Pro-94 enhances binding affinity of the CLE41p peptide for its receptor. Mostly expressed in inflorescence and roots, and, to a lower extent, in seedlings, flowers, leaves and siliques. Observed along the vascular strands in cotyledons, leaves and roots, but not in shoot apical meristems (SAM). Restricted to the phloem and the neighboring pericycle cells in the roots and hypocotyls.

The protein localises to the secreted. Its subcellular location is the extracellular space. In terms of biological role, extracellular signal peptide that regulates cell fate. May act with TDR as a ligand-receptor pair in a signal transduction pathway that represses tracheary element differentiation but promotes the formation of procambial cells adjacent to phloem cells in the veins in an auxin-dependent manner. Regulates the transition of protophloem cells from proliferation to differentiation, thus impinging on postembryonic growth capacity of the root meristem; this signaling pathway requires CRN and CLV2. The chain is CLAVATA3/ESR (CLE)-related protein 41 from Arabidopsis thaliana (Mouse-ear cress).